The chain runs to 901 residues: Protein translocase subunit SecA 1 (901 aa).

ATP-binding positions include Gln87, Gly105 to Thr109, and Asp500. Residues Leu847 to Ser901 form a disordered region. Cys885, Cys887, Cys896, and Cys897 together coordinate Zn(2+).

The protein belongs to the SecA family. Monomer and homodimer. Part of the essential Sec protein translocation apparatus which comprises SecA, SecYEG and auxiliary proteins SecDF-YajC and YidC. Requires Zn(2+) as cofactor.

The protein localises to the cell inner membrane. Its subcellular location is the cytoplasm. It catalyses the reaction ATP + H2O + cellular proteinSide 1 = ADP + phosphate + cellular proteinSide 2.. In terms of biological role, part of the Sec protein translocase complex. Interacts with the SecYEG preprotein conducting channel. Has a central role in coupling the hydrolysis of ATP to the transfer of proteins into and across the cell membrane, serving both as a receptor for the preprotein-SecB complex and as an ATP-driven molecular motor driving the stepwise translocation of polypeptide chains across the membrane. The sequence is that of Protein translocase subunit SecA 1 from Magnetococcus marinus (strain ATCC BAA-1437 / JCM 17883 / MC-1).